The primary structure comprises 380 residues: Kappa-type opioid receptor (380 aa).

Topologically, residues 1 to 57 (MGRRRQGPAQPASELPARNACLLPNGSAWLPGWAEPDGNGSAGPQDEQLEPAHISPA) are extracellular. Residues Asn25 and Asn39 are each glycosylated (N-linked (GlcNAc...) asparagine). A helical transmembrane segment spans residues 58–85 (IPVIITAVYSVVFVVGLVGNSLVMFVII). The Cytoplasmic portion of the chain corresponds to 86 to 95 (RYTKMKTATN). A helical transmembrane segment spans residues 96–119 (IYIFNLALADALVTTTMPFQSTVY). Residues 120 to 132 (LMNSWPFGDVLCK) lie on the Extracellular side of the membrane. A disulfide bridge connects residues Cys131 and Cys210. The helical transmembrane segment at 133-154 (IVISIDYYNMFTSIFTLTMMSV) threads the bilayer. Over 155–173 (DRYIAVCHPVKALDFRTPL) the chain is Cytoplasmic. The chain crosses the membrane as a helical span at residues 174-196 (KAKIINICIWLLSSSVGISAIIL). Residues 197–222 (GGTKVREDVDIIECSLQFPDDDYSWW) lie on the Extracellular side of the membrane. Residues 223–247 (DLFMKICVFVFAFVIPVLIIIVCYT) traverse the membrane as a helical segment. Over 248-274 (LMILRLKSVRLLSGSREKDRNLRRITR) the chain is Cytoplasmic. Residues 275 to 296 (LVLVVVAVFIICWTPIHIFILV) form a helical membrane-spanning segment. Topologically, residues 297 to 311 (EALGSTSHSTAALSS) are extracellular. The helical transmembrane segment at 312 to 333 (YYFCIALGYTNSSLNPILYAFL) threads the bilayer. At 334 to 380 (DENFKRCFRDFCFPIKMRMERQSTSRVRNTVQDPAYMRNVDGVNKPV) the chain is on the cytoplasmic side. Cys345 is lipidated: S-palmitoyl cysteine.

It belongs to the G-protein coupled receptor 1 family. As to quaternary structure, interacts with NHERF1. Interacts with GABARAPL1.

The protein localises to the cell membrane. Its function is as follows. G-protein coupled opioid receptor that functions as a receptor for endogenous alpha-neoendorphins and dynorphins, but has low affinity for beta-endorphins. Also functions as a receptor for various synthetic opioids and for the psychoactive diterpene salvinorin A. Ligand binding causes a conformation change that triggers signaling via guanine nucleotide-binding proteins (G proteins) and modulates the activity of down-stream effectors, such as adenylate cyclase. Signaling leads to the inhibition of adenylate cyclase activity. Inhibits neurotransmitter release by reducing calcium ion currents and increasing potassium ion conductance. Plays a role in the perception of pain. Plays a role in mediating reduced physical activity upon treatment with synthetic opioids. Plays a role in the regulation of salivation in response to synthetic opioids. May play a role in arousal and regulation of autonomic and neuroendocrine functions. The chain is Kappa-type opioid receptor (OPRK1) from Cavia porcellus (Guinea pig).